Here is a 118-residue protein sequence, read N- to C-terminus: Large ribosomal subunit protein uL18 (118 aa).

Belongs to the universal ribosomal protein uL18 family. Part of the 50S ribosomal subunit; part of the 5S rRNA/L5/L18/L25 subcomplex. Contacts the 5S and 23S rRNAs.

This is one of the proteins that bind and probably mediate the attachment of the 5S RNA into the large ribosomal subunit, where it forms part of the central protuberance. In Rickettsia peacockii (strain Rustic), this protein is Large ribosomal subunit protein uL18.